The chain runs to 123 residues: Snaclec echicetin subunit beta (123 aa).

In terms of domain architecture, C-type lectin spans Asn1–Cys121. Disulfide bonds link Cys2/Cys13, Cys30/Cys119, and Cys96/Cys111.

This sequence belongs to the snaclec family. In terms of assembly, heterodimer of subunits alpha and beta; disulfide-linked. Forms an active complex with the pentameric immunoglobuline Mkappa (IgMkappa). As to expression, expressed by the venom gland.

Its subcellular location is the secreted. Its function is as follows. Echicetin itself inhibits aggregation of washed platelets induced by vWF, thrombin or alboaggregin-A. However, when complexed with the pentameric plasma immunoglobulin Mkappa (IgMkappa), echicetin binds specifically to GPIb and activates platelets. This is caused by P-selectin expression and activation of alpha-IIb/beta-3 as well as tyrosine phosphorylation of several signal transduction molecules, including p53/56(LYN), p64, p72(SYK), p70 to p90, and p120. In vivo, it induces thrombocytopenia when injected into mice, probably accounting of activation of platelets rather than inhibition. The sequence is that of Snaclec echicetin subunit beta from Echis carinatus sochureki (Saw-scaled viper).